A 458-amino-acid chain; its full sequence is MSRKASLSGFHEWLPAERLVEQHVLDTLRRTFELHGFAGIETRAVETLGQLLRKGEVDKEVYAVSRLAEDEEVAAGRREPKDPADPKRLALHFDLTVPFARYVVENAGHLAFPFRRYQMQKVWRGERPQEGRAREFTQADIDVVGDGALSPRYDADVALVMAEALGALPIGDFLIRVNNRKLAEGFYRGIGLEDTAGVLRSIDKLEKVGPEEVARLLQEEVGASPEQAAQALALADIRTSDTSFVERVRALGVTHELLEEGLTELADVVATLHRRAPGRAVADLSIARGLDYYTGTVYETVLVGHEQLGSICSGGRYDALASKGNRVFPGVGLSIGVTRLVMRMLSQQMAVASRSVPTAVYVALTADEDWSEAQDVAALLRERGIPAEVAVSAEKFGRQIKYADRRGIPFVWFMGRDDAGARVHEVKDIRSGEQHAADPADWTPPAEDLLPQVARAQD.

This sequence belongs to the class-II aminoacyl-tRNA synthetase family. Homodimer.

The protein localises to the cytoplasm. The catalysed reaction is tRNA(His) + L-histidine + ATP = L-histidyl-tRNA(His) + AMP + diphosphate + H(+). The chain is Histidine--tRNA ligase from Micrococcus luteus (strain ATCC 4698 / DSM 20030 / JCM 1464 / CCM 169 / CCUG 5858 / IAM 1056 / NBRC 3333 / NCIMB 9278 / NCTC 2665 / VKM Ac-2230) (Micrococcus lysodeikticus).